The primary structure comprises 238 residues: Ribonuclease PH (238 aa).

Phosphate contacts are provided by residues Arg86 and 124-126 (GTR).

The protein belongs to the RNase PH family. As to quaternary structure, homohexameric ring arranged as a trimer of dimers.

It carries out the reaction tRNA(n+1) + phosphate = tRNA(n) + a ribonucleoside 5'-diphosphate. In terms of biological role, phosphorolytic 3'-5' exoribonuclease that plays an important role in tRNA 3'-end maturation. Removes nucleotide residues following the 3'-CCA terminus of tRNAs; can also add nucleotides to the ends of RNA molecules by using nucleoside diphosphates as substrates, but this may not be physiologically important. Probably plays a role in initiation of 16S rRNA degradation (leading to ribosome degradation) during starvation. In Rhizobium rhizogenes (strain K84 / ATCC BAA-868) (Agrobacterium radiobacter), this protein is Ribonuclease PH.